The primary structure comprises 438 residues: MYAEETNNVTAIKDIRAREILDSRGNPTIEADVILADGTIGRAAAPSGASTGSREALELRDGDQSRYMGKGVKKAVANVNSQIRSALMDKDVTAQQAIDDAMIALDGTENKDNLGANAILAVSLAVAKAAAKSQSLPLHQYIADLRNQTSLTMPVPMMNIINGGEHADNTVDIQEFMIEPVGFSSFSEALRAGTEIFHSLKSVLKSQGLNTAVGDEGGFAPNLRSNEEAITVIMQAIEQVGYTAGKDIHLALDCAATEFYKDGKYVLAGEGNKSFDSQGFSDYLVGLARQYPIISIEDGLDESDWDGWKYLTEQIGDKVQLVGDDLFVTNPAILQEGIDKKIANAILIKFNQIGTLSETLDAIYLAKKNGYATVISHRSGETEDSTIADLAVGTAAGQIKTGSLCRSDRVAKYNQLLRIEQQVRASYRGREEFIGLRG.

A (2R)-2-phosphoglycerate-binding site is contributed by Q174. Catalysis depends on E216, which acts as the Proton donor. Positions 253, 297, and 324 each coordinate Mg(2+). K349, R378, S379, and K400 together coordinate (2R)-2-phosphoglycerate. Residue K349 is the Proton acceptor of the active site.

This sequence belongs to the enolase family. Component of the RNA degradosome, a multiprotein complex involved in RNA processing and mRNA degradation. It depends on Mg(2+) as a cofactor.

It is found in the cytoplasm. It localises to the secreted. Its subcellular location is the cell surface. It catalyses the reaction (2R)-2-phosphoglycerate = phosphoenolpyruvate + H2O. It participates in carbohydrate degradation; glycolysis; pyruvate from D-glyceraldehyde 3-phosphate: step 4/5. Functionally, catalyzes the reversible conversion of 2-phosphoglycerate (2-PG) into phosphoenolpyruvate (PEP). It is essential for the degradation of carbohydrates via glycolysis. The sequence is that of Enolase from Psychrobacter cryohalolentis (strain ATCC BAA-1226 / DSM 17306 / VKM B-2378 / K5).